Here is a 512-residue protein sequence, read N- to C-terminus: Anaerobic nitric oxide reductase transcription regulator NorR (512 aa).

A Sigma-54 factor interaction domain is found at Met-190–Val-419. Residues Gly-218 to Glu-225 and Ala-281 to Glu-290 each bind ATP. Positions Trp-487–Lys-506 form a DNA-binding region, H-T-H motif.

The protein operates within nitrogen metabolism; nitric oxide reduction. Required for the expression of anaerobic nitric oxide (NO) reductase, acts as a transcriptional activator for at least the norVW operon. Activation also requires sigma-54. In Aliivibrio fischeri (strain ATCC 700601 / ES114) (Vibrio fischeri), this protein is Anaerobic nitric oxide reductase transcription regulator NorR.